Reading from the N-terminus, the 309-residue chain is Ferrochelatase (309 aa).

His-187 and Glu-265 together coordinate Fe cation.

The protein belongs to the ferrochelatase family.

It is found in the cytoplasm. The catalysed reaction is heme b + 2 H(+) = protoporphyrin IX + Fe(2+). The protein operates within porphyrin-containing compound metabolism; protoheme biosynthesis; protoheme from protoporphyrin-IX: step 1/1. Its function is as follows. Catalyzes the ferrous insertion into protoporphyrin IX. The chain is Ferrochelatase from Nitratiruptor sp. (strain SB155-2).